A 439-amino-acid polypeptide reads, in one-letter code: Membrane sensor protein UhpC (439 aa).

Topologically, residues 1–25 (MLPFLKAPADAPLMTDKYEIDARYR) are cytoplasmic. Residues 26–45 (YWRRHILLTIWLGYALFYFT) traverse the membrane as a helical segment. At 46–66 (RKSFNAAVPEILANGVLSRSD) the chain is on the periplasmic side. Residues 67-87 (IGLLATLFYITYGVSKFVSGI) traverse the membrane as a helical segment. The Cytoplasmic segment spans residues 88 to 95 (VSDRSNAR). Residues 96-118 (YFMGIGLIATGIINILFGFSTSL) form a helical membrane-spanning segment. Topologically, residues 119–121 (WAF) are periplasmic. The chain crosses the membrane as a helical span at residues 122 to 144 (AVLWVLNAFFQGWGSPVCARLLT). At 145-162 (AWYSRTERGGWWALWNTA) the chain is on the cytoplasmic side. The chain crosses the membrane as a helical span at residues 163-183 (HNVGGALIPIVMAAAALHYGW). A topological domain (periplasmic) is located at residue Arg184. Residues 185 to 205 (AGMMIAGCMAIVVGIFLCWRL) form a helical membrane-spanning segment. Residues 206-244 (RDRPQALGLPAVGEWRHDALEIAQQQEGAGLTRKEILTK) are Cytoplasmic-facing. Residues 245–265 (YVLLNPYIWLLSFCYVLVYVV) form a helical membrane-spanning segment. Topologically, residues 266–289 (RAAINDWGNLYMSETLGVDLVTAN) are periplasmic. A helical transmembrane segment spans residues 290–310 (TAVTMFELGGFIGALVAGWGS). Over 311–322 (DKLFNGNRGPMN) the chain is Cytoplasmic. The chain crosses the membrane as a helical span at residues 323 to 343 (LIFAAGILLSVGSLWLMPFAS). Residues 344–349 (YVMQAT) are Periplasmic-facing. A helical transmembrane segment spans residues 350–370 (CFFTIGFFVFGPQMLIGMAAA). Topologically, residues 371–379 (ECSHKEAAG) are cytoplasmic. The helical transmembrane segment at 380-400 (AATGFVGLFAYLGASLAGWPL) threads the bilayer. The Periplasmic segment spans residues 401 to 410 (AKVLDTWHWS). Residues 411–431 (GFFVVISIAAGISALLLLPFL) form a helical membrane-spanning segment. Topologically, residues 432 to 439 (NAQTPREA) are cytoplasmic.

This sequence belongs to the major facilitator superfamily. Organophosphate:Pi antiporter (OPA) (TC 2.A.1.4) family.

Its subcellular location is the cell inner membrane. In terms of biological role, part of the UhpABC signaling cascade that controls the expression of the hexose phosphate transporter UhpT. UhpC senses external glucose-6-phosphate and interacts with the histidine kinase UhpB, leading to the stimulation of the autokinase activity of UhpB. This is Membrane sensor protein UhpC from Escherichia coli (strain K12).